The primary structure comprises 391 residues: Cystathionine beta-lyase MetC (391 aa).

Lysine 196 is modified (N6-(pyridoxal phosphate)lysine).

It belongs to the trans-sulfuration enzymes family. In terms of assembly, homotetramer. Pyridoxal 5'-phosphate is required as a cofactor.

It catalyses the reaction L,L-cystathionine + H2O = L-homocysteine + pyruvate + NH4(+). It carries out the reaction an S-substituted L-cysteine + H2O = a thiol + pyruvate + NH4(+). The protein operates within amino-acid biosynthesis; L-methionine biosynthesis via de novo pathway; L-homocysteine from L-cystathionine: step 1/1. Cystathionine beta-lyase activity is inhibited by sweat components such as glycine, serine and ammonium sulfate. Inhibited by cystathionine at a concentration higher than 6 mM. Catalyzes the transformation of cystathionine into homocysteine. Can also catalyze, at low levels, the conversion of cystathionine into methionine and the conversion of methionine into methanethiol. This chain is Cystathionine beta-lyase MetC, found in Staphylococcus haemolyticus (strain JCSC1435).